A 214-amino-acid polypeptide reads, in one-letter code: Probable transaldolase (214 aa).

Residue K83 is the Schiff-base intermediate with substrate of the active site.

This sequence belongs to the transaldolase family. Type 3B subfamily.

The protein localises to the cytoplasm. The enzyme catalyses D-sedoheptulose 7-phosphate + D-glyceraldehyde 3-phosphate = D-erythrose 4-phosphate + beta-D-fructose 6-phosphate. It functions in the pathway carbohydrate degradation; pentose phosphate pathway; D-glyceraldehyde 3-phosphate and beta-D-fructose 6-phosphate from D-ribose 5-phosphate and D-xylulose 5-phosphate (non-oxidative stage): step 2/3. Transaldolase is important for the balance of metabolites in the pentose-phosphate pathway. This is Probable transaldolase from Desulfotalea psychrophila (strain LSv54 / DSM 12343).